A 403-amino-acid polypeptide reads, in one-letter code: GDSL esterase/lipase At1g28590 (403 aa).

The signal sequence occupies residues 1-27; sequence MASLDSLPAMKLVRFILSTLLVTSVNS. Catalysis depends on Ser43, which acts as the Nucleophile. Residues Asn139 and Asn323 are each glycosylated (N-linked (GlcNAc...) asparagine). Active-site residues include Asp346 and His349.

The protein belongs to the 'GDSL' lipolytic enzyme family.

Its subcellular location is the secreted. The chain is GDSL esterase/lipase At1g28590 from Arabidopsis thaliana (Mouse-ear cress).